Reading from the N-terminus, the 434-residue chain is Nuclear envelope integral membrane protein 1b (434 aa).

The first 29 residues, 1–29 (MAGEVEGRGCGFSLGVLVTLLVLPLPSLC), serve as a signal peptide directing secretion. Transmembrane regions (helical) follow at residues 151 to 171 (PRLF…DTLS), 175 to 195 (LFFY…ILVF), 206 to 226 (PFFA…QLVF), 239 to 259 (YLIV…YIYG), and 280 to 300 (LLMY…VIAF). The tract at residues 176–287 (FFYSTGITVG…GLLLMYVSVQ (112 aa)) is a; required for its colocalization with lamins at the nuclear envelope. The Nuclear localization signal signature appears at 317-325 (RKIKLKRAK). Residues 326–395 (PGPPRLLTEE…LTPNEVSVHE (70 aa)) form a b; interaction with ran region. Residues 326–434 (PGPPRLLTEE…PLYPIPRSVF (109 aa)) are interaction with banf1-a and banf1-b. A BAF-binding site (BBS); essential for interaction with banf1-a, banf1-b and ran region spans residues 368–375 (SRIQSPKR).

Belongs to the NEMP family. As to quaternary structure, interacts with banf1-a and banf1-b. Interacts with ran-gtp. In terms of processing, phosphorylated.

The protein resides in the nucleus inner membrane. It is found in the nucleus envelope. In terms of biological role, in concert with ran, required for proper eye development. May be involved in the expression of early eye marker genes. Contributes to nuclear envelope stiffness in germ cells. Required for fertility. Essential for normal erythropoiesis. Required for efficient nuclear envelope opening and enucleation during the late stages of erythroblast maturation. The protein is Nuclear envelope integral membrane protein 1b (nemp1b) of Xenopus laevis (African clawed frog).